Reading from the N-terminus, the 176-residue chain is 3-hydroxydecanoyl-[acyl-carrier-protein] dehydratase (176 aa).

The active site involves His-71.

It belongs to the thioester dehydratase family. FabA subfamily. Homodimer.

Its subcellular location is the cytoplasm. The catalysed reaction is a (3R)-hydroxyacyl-[ACP] = a (2E)-enoyl-[ACP] + H2O. It carries out the reaction (3R)-hydroxydecanoyl-[ACP] = (2E)-decenoyl-[ACP] + H2O. It catalyses the reaction (2E)-decenoyl-[ACP] = (3Z)-decenoyl-[ACP]. It participates in lipid metabolism; fatty acid biosynthesis. In terms of biological role, necessary for the introduction of cis unsaturation into fatty acids. Catalyzes the dehydration of (3R)-3-hydroxydecanoyl-ACP to E-(2)-decenoyl-ACP and then its isomerization to Z-(3)-decenoyl-ACP. Can catalyze the dehydratase reaction for beta-hydroxyacyl-ACPs with saturated chain lengths up to 16:0, being most active on intermediate chain length. The chain is 3-hydroxydecanoyl-[acyl-carrier-protein] dehydratase from Afipia carboxidovorans (strain ATCC 49405 / DSM 1227 / KCTC 32145 / OM5) (Oligotropha carboxidovorans).